The chain runs to 489 residues: Rhamnulokinase (489 aa).

Residue 13 to 17 (ASSGR) coordinates ATP. Cys-68 and Cys-222 are oxidised to a cystine. Substrate is bound by residues Gly-83 and 236–238 (HDT). Residue Asp-237 is the Proton acceptor of the active site. Thr-259 contacts ATP. Residue Asn-296 coordinates substrate. Gln-304 contributes to the ATP binding site. Cys-353 and Cys-370 are disulfide-bonded. Gly-402 provides a ligand contact to ATP. Cys-413 and Cys-417 form a disulfide bridge.

Belongs to the rhamnulokinase family. It depends on Mg(2+) as a cofactor.

It catalyses the reaction L-rhamnulose + ATP = L-rhamnulose 1-phosphate + ADP + H(+). It participates in carbohydrate degradation; L-rhamnose degradation; glycerone phosphate from L-rhamnose: step 2/3. In terms of biological role, involved in the catabolism of L-rhamnose (6-deoxy-L-mannose). Catalyzes the transfer of the gamma-phosphate group from ATP to the 1-hydroxyl group of L-rhamnulose to yield L-rhamnulose 1-phosphate. In Shigella flexneri serotype 5b (strain 8401), this protein is Rhamnulokinase.